The following is a 460-amino-acid chain: TNF receptor-associated factor family protein DDB_G0290883 (460 aa).

The RING-type; degenerate zinc finger occupies 27 to 67 (CPICFEFIYKKQIYQCKSGHHACKECWEKSLETKKECMTCK). TRAF-type zinc fingers lie at residues 141–194 (SHLI…KKEL) and 196–253 (THYK…SELQ). The region spanning 320–448 (GYRNKWIISN…DDKLTIEIYI (129 aa)) is the MATH domain.

It belongs to the TNF receptor-associated factor family. A subfamily.

The protein localises to the cytoplasm. Probable adapter protein and signal transducer that links members of the tumor necrosis factor receptor family to different signaling pathways by association with the receptor cytoplasmic domain and kinases. This Dictyostelium discoideum (Social amoeba) protein is TNF receptor-associated factor family protein DDB_G0290883.